We begin with the raw amino-acid sequence, 108 residues long: uncharacterized protein (108 aa).

Residues 81–108 form a disordered region; that stretch reads FKCLDSPPPVPPSSSQGEDEENTVDSQY. The span at 97–108 shows a compositional bias: acidic residues; it reads GEDEENTVDSQY.

This is an uncharacterized protein from Saccharomyces cerevisiae (strain ATCC 204508 / S288c) (Baker's yeast).